Consider the following 327-residue polypeptide: UPF0665 family protein C23C4.06c (327 aa).

Belongs to the UPF0665 family.

The protein resides in the cytoplasm. It is found in the nucleus. The chain is UPF0665 family protein C23C4.06c from Schizosaccharomyces pombe (strain 972 / ATCC 24843) (Fission yeast).